The following is a 461-amino-acid chain: Ribosomal RNA processing protein 1 homolog A (461 aa).

Positions Q239 to E252 are enriched in acidic residues. 2 disordered regions span residues Q239–V295 and E354–E461. Phosphoserine is present on residues S245, S247, S250, and S251. Residues G253 to K267 show a composition bias toward basic and acidic residues. Residues R357–L368 show a composition bias toward basic residues. The span at Q371–P381 shows a compositional bias: basic and acidic residues. S383 is modified (phosphoserine). Position 412 is a phosphothreonine (T412). Residues R425–P437 are compositionally biased toward basic residues. Residue Q427 is modified to N5-methylglutamine.

It belongs to the RRP1 family. As to quaternary structure, interacts with C1QBP. Interacts with RRP1B. In terms of processing, methylated at Gln-427 by N6AMT1. In terms of tissue distribution, ubiquitously expressed in fetal and adult tissues.

The protein resides in the nucleus. Its subcellular location is the nucleolus. Functionally, plays a critical role in the generation of 28S rRNA. This chain is Ribosomal RNA processing protein 1 homolog A (RRP1), found in Homo sapiens (Human).